The following is a 313-amino-acid chain: Ribosomal RNA small subunit methyltransferase H (313 aa).

S-adenosyl-L-methionine-binding positions include 35–37 (GGH), D55, F79, D101, and Q108.

Belongs to the methyltransferase superfamily. RsmH family.

It localises to the cytoplasm. It carries out the reaction cytidine(1402) in 16S rRNA + S-adenosyl-L-methionine = N(4)-methylcytidine(1402) in 16S rRNA + S-adenosyl-L-homocysteine + H(+). Specifically methylates the N4 position of cytidine in position 1402 (C1402) of 16S rRNA. The polypeptide is Ribosomal RNA small subunit methyltransferase H (Salmonella paratyphi A (strain ATCC 9150 / SARB42)).